The chain runs to 260 residues: Cell division protein DivIB (260 aa).

Residues 1 to 25 (MGAQDQNGKNHGGLFRDFQNRNVKK) are Cytoplasmic-facing. The helical transmembrane segment at 26-46 (MWPLVMPITIILLVMIFMISS) threads the bilayer. At 47–260 (YSRVKKVTVS…STKTTSVQGY (214 aa)) the chain is on the extracellular side. The region spanning 48–119 (SRVKKVTVSG…NQVKIKVEEY (72 aa)) is the POTRA domain.

The protein belongs to the FtsQ/DivIB family. DivIB subfamily.

The protein resides in the cell membrane. Functionally, cell division protein that may be involved in stabilizing or promoting the assembly of the division complex. This Lentilactobacillus buchneri (strain NRRL B-30929) (Lactobacillus buchneri) protein is Cell division protein DivIB.